We begin with the raw amino-acid sequence, 452 residues long: NAD kinase 2, mitochondrial (452 aa).

The N-terminal 50 residues, methionine 1 to alanine 50, are a transit peptide targeting the mitochondrion. Residues arginine 23–glycine 52 are disordered. Lysine 64 carries the N6-acetyllysine; alternate modification. N6-succinyllysine; alternate is present on lysine 64. Position 176 is a phosphoserine (serine 176). Lysine 312 is modified (N6-succinyllysine). Residue lysine 327 is modified to N6-acetyllysine; alternate. Lysine 327 carries the N6-succinyllysine; alternate modification. Serine 377 carries the post-translational modification Phosphoserine. Lysine 407 is modified (N6-acetyllysine).

This sequence belongs to the NAD kinase family. As to quaternary structure, homodimer.

Its subcellular location is the mitochondrion. The catalysed reaction is NAD(+) + ATP = ADP + NADP(+) + H(+). Its activity is regulated as follows. Inhibited by NADH, NADPH and NADP(+). Mitochondrial NAD(+) kinase that phosphorylates NAD(+) to yield NADP(+). Can use both ATP or inorganic polyphosphate as the phosphoryl donor. In Mus musculus (Mouse), this protein is NAD kinase 2, mitochondrial (Nadk2).